The following is a 354-amino-acid chain: Peptide chain release factor 1 (354 aa).

An N5-methylglutamine modification is found at Q230.

Belongs to the prokaryotic/mitochondrial release factor family. Post-translationally, methylated by PrmC. Methylation increases the termination efficiency of RF1.

Its subcellular location is the cytoplasm. In terms of biological role, peptide chain release factor 1 directs the termination of translation in response to the peptide chain termination codons UAG and UAA. The chain is Peptide chain release factor 1 from Thermus thermophilus (strain ATCC BAA-163 / DSM 7039 / HB27).